The sequence spans 261 residues: Phosphoribosylaminoimidazole-succinocarboxamide synthase (261 aa).

It belongs to the SAICAR synthetase family.

The catalysed reaction is 5-amino-1-(5-phospho-D-ribosyl)imidazole-4-carboxylate + L-aspartate + ATP = (2S)-2-[5-amino-1-(5-phospho-beta-D-ribosyl)imidazole-4-carboxamido]succinate + ADP + phosphate + 2 H(+). It participates in purine metabolism; IMP biosynthesis via de novo pathway; 5-amino-1-(5-phospho-D-ribosyl)imidazole-4-carboxamide from 5-amino-1-(5-phospho-D-ribosyl)imidazole-4-carboxylate: step 1/2. The polypeptide is Phosphoribosylaminoimidazole-succinocarboxamide synthase (Novosphingobium aromaticivorans (strain ATCC 700278 / DSM 12444 / CCUG 56034 / CIP 105152 / NBRC 16084 / F199)).